Here is a 735-residue protein sequence, read N- to C-terminus: MAKINTQHSYPGMHGLSVRTTDEDIERIENGFIRTHSLCEDTSSELQRVISMEGRHLSGSQTSPFTGRGAMARLSRFVVSLRSWATRHLHHEDQRPDSFLERIRGPELVEVSSRQSNIRSFLGIREQPGGVNGPWPLARFNVNFSNNTNEDKKEEKKEVKEEKKEEKKEEKKEEKKDDKKDDKKDDKKDDKKKEEQKKEVFVIDPSSNMYYNWLTIIAAPVFYNWCMLICRACFDELQIDHIKLWLFLDYCSDIIYVFDMFVRFRTGFLEQGLLVKDEKKLRDHYTQTVQFKLDVLSLLPTDLAYLKLGLNYPELRFNRLLRIARLFEFFDRTETRTNYPNMFRIGNLVLYILIIIHWNACIYFAISKVIGFGTDSWVYPNVSIPEYGRLSRKYIYSLYWSTLTLTTIGETPPPVKDEEYLFVVIDFLVGVLIFATIVGNVGSMISNMNASRAEFQAKVDSIKQYMHFRKVTKDLEARVIKWFDYLWTNKKTVDEKEVLKNLPDKLKAEIAINVHLDTLKKVRIFQDCEAGLLIELVLKLKPTVFSPGDYICKKGDIGREMYIIKEGKLAVVADDGITQFVVLSDGSYFGEISILNIKGSKSGNRRTANIRSIGYSDLFCLSKDDLMEALTEYPEAKKALEEKGRQILMKDNLIDEEAAKAGADPKDLEEKIDRLETALDTLQTRFARLLAEYSSSQQKVKQRLARVETRVKKYGSGSLSVGEPEPEKPEEQKKD.

Over 1–214 (MAKINTQHSY…PSSNMYYNWL (214 aa)) the chain is Cytoplasmic. Positions 142–191 (VNFSNNTNEDKKEEKKEVKEEKKEEKKEEKKEEKKDDKKDDKKDDKKDDK) are disordered. Residues 149–191 (NEDKKEEKKEVKEEKKEEKKEEKKEEKKDDKKDDKKDDKKDDK) show a composition bias toward basic and acidic residues. The chain crosses the membrane as a helical span at residues 215 to 236 (TIIAAPVFYNWCMLICRACFDE). Over 237-246 (LQIDHIKLWL) the chain is Extracellular. A helical transmembrane segment spans residues 247 to 267 (FLDYCSDIIYVFDMFVRFRTG). At 268–292 (FLEQGLLVKDEKKLRDHYTQTVQFK) the chain is on the cytoplasmic side. The chain crosses the membrane as a helical span at residues 293–311 (LDVLSLLPTDLAYLKLGLN). The Extracellular portion of the chain corresponds to 312–316 (YPELR). A helical transmembrane segment spans residues 317–335 (FNRLLRIARLFEFFDRTET). Over 336-342 (RTNYPNM) the chain is Cytoplasmic. The chain crosses the membrane as a helical span at residues 343-366 (FRIGNLVLYILIIIHWNACIYFAI). At 367-389 (SKVIGFGTDSWVYPNVSIPEYGR) the chain is on the extracellular side. Helical transmembrane passes span 390-424 (LSRK…LFVV) and 425-449 (IDFL…SNMN). The Cytoplasmic segment spans residues 450–735 (ASRAEFQAKV…PEKPEEQKKD (286 aa)). Residues 532–654 (LLIE…DNLI), glutamate 591, and arginine 606 each bind 3',5'-cyclic GMP. A disordered region spans residues 715–735 (GSGSLSVGEPEPEKPEEQKKD). Positions 725–735 (EPEKPEEQKKD) are enriched in basic and acidic residues.

The protein belongs to the cyclic nucleotide-gated cation channel (TC 1.A.1.5) family.

The protein resides in the membrane. In terms of biological role, visual signal transduction is mediated by a G-protein coupled cascade using cGMP as second messenger. This protein can be activated by cyclic GMP which leads to an opening of the cation channel and thereby causing a depolarization of cone photoreceptors. In Gallus gallus (Chicken), this protein is Cyclic nucleotide-gated channel cone photoreceptor subunit alpha.